Reading from the N-terminus, the 213-residue chain is tRNA (guanine-N(7)-)-methyltransferase (213 aa).

4 residues coordinate S-adenosyl-L-methionine: glutamate 44, glutamate 69, asparagine 96, and aspartate 118. Aspartate 118 is an active-site residue. Lysine 122 is a binding site for substrate. Positions 124-129 (RHEKRR) are interaction with RNA. Residues aspartate 154 and 192 to 195 (TEYE) each bind substrate.

Belongs to the class I-like SAM-binding methyltransferase superfamily. TrmB family.

It catalyses the reaction guanosine(46) in tRNA + S-adenosyl-L-methionine = N(7)-methylguanosine(46) in tRNA + S-adenosyl-L-homocysteine. It participates in tRNA modification; N(7)-methylguanine-tRNA biosynthesis. Catalyzes the formation of N(7)-methylguanine at position 46 (m7G46) in tRNA. The polypeptide is tRNA (guanine-N(7)-)-methyltransferase (Latilactobacillus sakei subsp. sakei (strain 23K) (Lactobacillus sakei subsp. sakei)).